Reading from the N-terminus, the 353-residue chain is N6-methyladenosine RNA demethylase ALKB1 (353 aa).

The 130-residue stretch at Ile-223–Arg-352 folds into the Fe2OG dioxygenase domain. Fe cation contacts are provided by His-241, Asp-243, and His-308. A 2-oxoglutarate-binding site is contributed by Arg-343.

This sequence belongs to the alkB family. Fe(2+) is required as a cofactor.

It localises to the cytoplasm. It is found in the P-body. It catalyses the reaction an N(6)-methyladenosine in mRNA + 2-oxoglutarate + O2 = an adenosine in mRNA + formaldehyde + succinate + CO2. Its function is as follows. RNA demethylase that regulates the stability of mRNAs through an m(6)A-dependent manner. M6A is a modification present at internal sites of mRNAs and some non-coding RNAs and plays a role in mRNA stability and processing. Plays a role in pathogenicity towards plant host. The protein is N6-methyladenosine RNA demethylase ALKB1 of Pyricularia oryzae (strain 70-15 / ATCC MYA-4617 / FGSC 8958) (Rice blast fungus).